Here is a 160-residue protein sequence, read N- to C-terminus: Ribosome maturation factor RimP (160 aa).

This sequence belongs to the RimP family.

It is found in the cytoplasm. Functionally, required for maturation of 30S ribosomal subunits. This is Ribosome maturation factor RimP from Citrifermentans bemidjiense (strain ATCC BAA-1014 / DSM 16622 / JCM 12645 / Bem) (Geobacter bemidjiensis).